The following is a 730-amino-acid chain: MKPKNVPREIFNPFTNKTSLGTRREGLFLCKRLKLRPDNYLEEYCADLEVIDIMAPIRPADETERCPPTSTSDDQEAGDYLVSRNKKSRNSDYMLFSSDALVHIAHDAKVSEKYTWLGERLRLTFKMMRSDSRLIRTMCHSHGFMQCSSKNPSVNVIWMGAPVKSVRMRELMPWQRLNQFPRSTELTKKDRLYENIERSKSIFGESFDFIPEFYVTPRENRKMENAFVRVAKEIAAAGGELCFPGEFIVKPTNSRQGKGIFFANSMADIPAEGPLLVSRYLKDPYLVNNHKFDLRIYVAVTSFYPLVAYVYSEGLARLASRPYDTSASSADSNEYVHLTNYSINKNSTSFVRNESMSSEDLGHKWTLGALLRYVENEGKDAKLLMLRIEDLIVKSLLSIQNSVATASRTNLRFACTNFELFGFDVLVDQALKPWLLEVNLSPSLACDAPLDSLLKTRLIADLLNLACVPLLDRKIIDSVTPALRKSMNSQESESSETDDLELDPMCAKTLKRRPVGLKRSVLNKKIVSGSTSLIPNNEKKFDQIVRKAELEDGRRGDFIRVFPRNGTWGMYSPVMEDLGNEDFDERLFDEVVTKKNTKNSSGSSKASSSSASASSSSSSMHIEDLSDLFHEVMMQCDKYSSIADVPIEIREIISPWYEEASEYTKKITQEGETYACKLPVIRSTARLRTKSCAEFYEVRKVQLAKKKESEAMASKENEPIVLQAVVAKRI.

The TTL domain occupies 120-478 (RLRLTFKMMR…PLLDRKIIDS (359 aa)). ATP-binding positions include 278–281 (SRYL), Lys-291, and Asp-293. The disordered stretch occupies residues 594–618 (KKNTKNSSGSSKASSSSASASSSSS). The span at 600–618 (SSGSSKASSSSASASSSSS) shows a compositional bias: low complexity.

The protein belongs to the tubulin--tyrosine ligase family. Expressed in body wall muscles. Not expressed in sensory neurons.

It carries out the reaction L-glutamyl-[protein] + L-glutamate + ATP = gamma-L-glutamyl-L-glutamyl-[protein] + ADP + phosphate + H(+). Its function is as follows. Polyglutamylase which preferentially modifies alpha-tubulin. Involved in the side-chain initiation step of the polyglutamylation reaction rather than in the elongation step. Together with ttll-4 and ttll-11, required for male mating. Probably by regulating microtubule stability via the glutamylation of tubulin, negatively regulates axon regrowth after injury in PLM neurons. The sequence is that of Tubulin polyglutamylase ttll-5 from Caenorhabditis elegans.